The primary structure comprises 120 residues: Large ribosomal subunit protein uL18 (120 aa).

Belongs to the universal ribosomal protein uL18 family. In terms of assembly, part of the 50S ribosomal subunit; part of the 5S rRNA/L5/L18/L25 subcomplex. Contacts the 5S and 23S rRNAs.

Functionally, this is one of the proteins that bind and probably mediate the attachment of the 5S RNA into the large ribosomal subunit, where it forms part of the central protuberance. The polypeptide is Large ribosomal subunit protein uL18 (Methylobacterium radiotolerans (strain ATCC 27329 / DSM 1819 / JCM 2831 / NBRC 15690 / NCIMB 10815 / 0-1)).